We begin with the raw amino-acid sequence, 448 residues long: Histidinol dehydrogenase (448 aa).

NAD(+) is bound by residues Y136, Q197, and N220. The substrate site is built by S243, Q265, and H268. Residues Q265 and H268 each coordinate Zn(2+). Active-site proton acceptor residues include E333 and H334. Positions 334, 367, 421, and 426 each coordinate substrate. D367 contacts Zn(2+). H426 is a Zn(2+) binding site.

Belongs to the histidinol dehydrogenase family. Requires Zn(2+) as cofactor.

It carries out the reaction L-histidinol + 2 NAD(+) + H2O = L-histidine + 2 NADH + 3 H(+). It functions in the pathway amino-acid biosynthesis; L-histidine biosynthesis; L-histidine from 5-phospho-alpha-D-ribose 1-diphosphate: step 9/9. Catalyzes the sequential NAD-dependent oxidations of L-histidinol to L-histidinaldehyde and then to L-histidine. This is Histidinol dehydrogenase from Pseudomonas syringae pv. syringae (strain B728a).